The chain runs to 1262 residues: Clustered mitochondria protein homolog (1262 aa).

The segment at 1 to 47 (MTSGSELKAEVDAPVVNGKDELVHEEDNNDSGHSSINTPDASEDKQT) is disordered. Polar residues predominate over residues 31–40 (SGHSSINTPD). Residues 335–580 (AIELIEPFRV…RSMPPDVHYL (246 aa)) enclose the Clu domain.

It belongs to the CLU family.

It is found in the cytoplasm. MRNA-binding protein involved in proper cytoplasmic distribution of mitochondria. The chain is Clustered mitochondria protein homolog from Caenorhabditis briggsae.